The sequence spans 692 residues: DNA ligase (692 aa).

NAD(+) contacts are provided by residues 35 to 39, 88 to 89, and Glu117; these read DLVYD and SL. The N6-AMP-lysine intermediate role is filled by Lys119. Arg140, Glu176, Lys301, and Lys325 together coordinate NAD(+). 4 residues coordinate Zn(2+): Cys416, Cys419, Cys434, and Cys439. In terms of domain architecture, BRCT spans 611-692; sequence LTNQSNSWAS…FDLIKNSKKT (82 aa).

Belongs to the NAD-dependent DNA ligase family. LigA subfamily. Mg(2+) is required as a cofactor. The cofactor is Mn(2+).

It catalyses the reaction NAD(+) + (deoxyribonucleotide)n-3'-hydroxyl + 5'-phospho-(deoxyribonucleotide)m = (deoxyribonucleotide)n+m + AMP + beta-nicotinamide D-nucleotide.. Its function is as follows. DNA ligase that catalyzes the formation of phosphodiester linkages between 5'-phosphoryl and 3'-hydroxyl groups in double-stranded DNA using NAD as a coenzyme and as the energy source for the reaction. It is essential for DNA replication and repair of damaged DNA. This Mesomycoplasma hyopneumoniae (strain J / ATCC 25934 / NCTC 10110) (Mycoplasma hyopneumoniae) protein is DNA ligase.